The sequence spans 270 residues: ATP synthase subunit a (270 aa).

5 helical membrane passes run 40-60 (IDSL…FYAV), 98-118 (IAPL…MDLV), 143-163 (DVNI…YYSI), 208-228 (LFGN…MLPW), and 239-259 (AIFH…LTIV).

Belongs to the ATPase A chain family. As to quaternary structure, F-type ATPases have 2 components, CF(1) - the catalytic core - and CF(0) - the membrane proton channel. CF(1) has five subunits: alpha(3), beta(3), gamma(1), delta(1), epsilon(1). CF(0) has three main subunits: a(1), b(2) and c(9-12). The alpha and beta chains form an alternating ring which encloses part of the gamma chain. CF(1) is attached to CF(0) by a central stalk formed by the gamma and epsilon chains, while a peripheral stalk is formed by the delta and b chains.

The protein localises to the cell inner membrane. In terms of biological role, key component of the proton channel; it plays a direct role in the translocation of protons across the membrane. This chain is ATP synthase subunit a, found in Vibrio vulnificus (strain CMCP6).